A 430-amino-acid polypeptide reads, in one-letter code: UDP-N-acetylglucosamine 1-carboxyvinyltransferase (430 aa).

22 to 23 (KN) serves as a coordination point for phosphoenolpyruvate. A UDP-N-acetyl-alpha-D-glucosamine-binding site is contributed by arginine 102. The active-site Proton donor is the cysteine 126. 2-(S-cysteinyl)pyruvic acid O-phosphothioketal is present on cysteine 126. UDP-N-acetyl-alpha-D-glucosamine contacts are provided by residues 131 to 135 (RPVDL), 172 to 175 (KVSV), aspartate 317, and isoleucine 339.

It belongs to the EPSP synthase family. MurA subfamily.

It localises to the cytoplasm. The enzyme catalyses phosphoenolpyruvate + UDP-N-acetyl-alpha-D-glucosamine = UDP-N-acetyl-3-O-(1-carboxyvinyl)-alpha-D-glucosamine + phosphate. It participates in cell wall biogenesis; peptidoglycan biosynthesis. Functionally, cell wall formation. Adds enolpyruvyl to UDP-N-acetylglucosamine. The sequence is that of UDP-N-acetylglucosamine 1-carboxyvinyltransferase from Rhizobium meliloti (strain 1021) (Ensifer meliloti).